The following is a 316-amino-acid chain: Protease HtpX homolog (316 aa).

The helical transmembrane segment at 16-36 (LFMALGFTIGGTGGAMIALVV) threads the bilayer. Zn(2+) is bound at residue His130. Residue Glu131 is part of the active site. His134 provides a ligand contact to Zn(2+). Transmembrane regions (helical) follow at residues 145–165 (MTATIAGAISMLANFGMFFGA) and 174–194 (LATILAVFVAPFAAMIVQMAI). Residue Glu199 participates in Zn(2+) binding. A disordered region spans residues 285–316 (PNFAALSERRGSVSSVPRTRRRSSALDPNGRG).

It belongs to the peptidase M48B family. Requires Zn(2+) as cofactor.

Its subcellular location is the cell inner membrane. The polypeptide is Protease HtpX homolog (Rhizorhabdus wittichii (strain DSM 6014 / CCUG 31198 / JCM 15750 / NBRC 105917 / EY 4224 / RW1) (Sphingomonas wittichii)).